The following is a 70-amino-acid chain: Protein SlyX homolog (70 aa).

Residues 51 to 70 form a disordered region; that stretch reads RMREAEANRPGPTNEPPPHY.

This sequence belongs to the SlyX family.

In Nitrobacter hamburgensis (strain DSM 10229 / NCIMB 13809 / X14), this protein is Protein SlyX homolog.